Here is a 76-residue protein sequence, read N- to C-terminus: Precursor of CEP7 (76 aa).

The N-terminal stretch at Met-1–Gly-27 is a signal peptide. Residues Arg-28 to Asp-61 constitute a propeptide that is removed on maturation. 2 N-linked (GlcNAc...) asparagine glycosylation sites follow: Asn-37 and Asn-48. Positions Leu-49–His-76 are disordered. Hydroxyproline is present on residues Pro-65, Pro-68, and Pro-72.

Belongs to the C-terminally encoded plant signaling peptide (CEP) family. Interacts with CEP receptors (e.g. CEPR1 and CEPR2). The mature small signaling peptide is generated by proteolytic processing of the longer precursor.

The protein localises to the secreted. It is found in the extracellular space. Its subcellular location is the apoplast. In terms of biological role, extracellular signaling peptide that may regulate primary root growth rate and systemic nitrogen (N)-demand signaling. Mediates up-regulation of genes involved in N uptake and assimilation pathways. The chain is Precursor of CEP7 from Arabidopsis thaliana (Mouse-ear cress).